A 1301-amino-acid polypeptide reads, in one-letter code: DNA-directed RNA polymerase subunit beta (1301 aa).

The protein belongs to the RNA polymerase beta chain family. In terms of assembly, the RNAP catalytic core consists of 2 alpha, 1 beta, 1 beta' and 1 omega subunit. When a sigma factor is associated with the core the holoenzyme is formed, which can initiate transcription.

The catalysed reaction is RNA(n) + a ribonucleoside 5'-triphosphate = RNA(n+1) + diphosphate. Its function is as follows. DNA-dependent RNA polymerase catalyzes the transcription of DNA into RNA using the four ribonucleoside triphosphates as substrates. The protein is DNA-directed RNA polymerase subunit beta of Chlorobium luteolum (strain DSM 273 / BCRC 81028 / 2530) (Pelodictyon luteolum).